The chain runs to 304 residues: Solute carrier family 25 member 34 (304 aa).

Solcar repeat units follow at residues 4–97 (VPPA…ACQA), 101–194 (QQPG…AKAW), and 204–295 (DSWL…LRKL). The next 6 membrane-spanning stretches (helical) occupy residues 7–27 (AVDLVLGASACCLACVFTNPL), 45–65 (TYPRLYRGFVASVVAVVRADG), 98–120 (GLSQQPGGTVVAGAVAGALGAFV), 170–191 (VGGAVPRVMVGSAAQLATFASA), 206–226 (WLVALAGGMISSIAVVAVMTP), and 278–301 (LGPHTILSMLFWDELRKLAGWGQH).

The protein belongs to the mitochondrial carrier (TC 2.A.29) family.

It localises to the mitochondrion inner membrane. It catalyses the reaction a dicarboxylate(in) + sulfate(out) = a dicarboxylate(out) + sulfate(in). Functionally, putative antiporter that exchanges dicarboxylates and sulfur oxoanions across the inner membrane of mitochondria. The polypeptide is Solute carrier family 25 member 34 (SLC25A34) (Bos taurus (Bovine)).